The primary structure comprises 86 residues: Large ribosomal subunit protein bL31 (86 aa).

Positions G66 to K86 are disordered. Residues E77–K86 are compositionally biased toward basic and acidic residues.

Belongs to the bacterial ribosomal protein bL31 family. Type A subfamily. In terms of assembly, part of the 50S ribosomal subunit.

Binds the 23S rRNA. The chain is Large ribosomal subunit protein bL31 from Prochlorococcus marinus (strain MIT 9515).